The chain runs to 574 residues: DNA mismatch repair protein MutL (574 aa).

It belongs to the DNA mismatch repair MutL/HexB family.

Its function is as follows. This protein is involved in the repair of mismatches in DNA. It is required for dam-dependent methyl-directed DNA mismatch repair. May act as a 'molecular matchmaker', a protein that promotes the formation of a stable complex between two or more DNA-binding proteins in an ATP-dependent manner without itself being part of a final effector complex. The sequence is that of DNA mismatch repair protein MutL from Coxiella burnetii (strain Dugway 5J108-111).